We begin with the raw amino-acid sequence, 356 residues long: Septin-2A (356 aa).

In terms of domain architecture, Septin-type G spans 33–305; the sequence is KGFEFTLMVV…ENFRSERLKK (273 aa). The G1 motif stretch occupies residues 43–50; it reads GESGLGKS. Residues 43 to 50, Thr-77, Gly-103, 182 to 190, Gly-240, and Arg-255 contribute to the GTP site; these read GESGLGKS and KADTLTLRE. The interval 100 to 103 is G3 motif; that stretch reads DTPG. The segment at 181–184 is G4 motif; sequence AKAD. The segment at 259–269 is important for dimerization; sequence WGVVEVENTEH.

The protein belongs to the TRAFAC class TrmE-Era-EngA-EngB-Septin-like GTPase superfamily. Septin GTPase family. As to quaternary structure, septins polymerize into heterooligomeric protein complexes that form filaments, and associate with cellular membranes, actin filaments and microtubules. GTPase activity is required for filament formation. Can form heterooligomers with other family members and form filaments. Interacts with wdpcp.

Its subcellular location is the cytoplasm. It localises to the cytoskeleton. It is found in the spindle. The protein resides in the cleavage furrow. The protein localises to the midbody. Its subcellular location is the cell projection. It localises to the cilium membrane. Its function is as follows. Filament-forming cytoskeletal GTPase. Required for normal organization of the actin cytoskeleton. Plays a role in the biogenesis of polarized columnar-shaped epithelium. Required for the progression through mitosis through regulation of chromosome congression. During anaphase, may be required for chromosome segregation and spindle elongation. Probably plays a role in ciliogenesis and collective cell movements including convergent extension during gastrulation. In cilia, required for the integrity of the diffusion barrier at the base of the primary cilium that prevents diffusion of transmembrane proteins between the cilia and plasma membranes. Controls cell shape and not polarization of cells during convergent extension. This Xenopus laevis (African clawed frog) protein is Septin-2A (sept2-a).